A 487-amino-acid polypeptide reads, in one-letter code: Glutamyl-tRNA(Gln) amidotransferase subunit A (487 aa).

Catalysis depends on charge relay system residues lysine 74 and serine 149. Residue serine 173 is the Acyl-ester intermediate of the active site.

The protein belongs to the amidase family. GatA subfamily. In terms of assembly, heterotrimer of A, B and C subunits.

It carries out the reaction L-glutamyl-tRNA(Gln) + L-glutamine + ATP + H2O = L-glutaminyl-tRNA(Gln) + L-glutamate + ADP + phosphate + H(+). Its function is as follows. Allows the formation of correctly charged Gln-tRNA(Gln) through the transamidation of misacylated Glu-tRNA(Gln) in organisms which lack glutaminyl-tRNA synthetase. The reaction takes place in the presence of glutamine and ATP through an activated gamma-phospho-Glu-tRNA(Gln). This chain is Glutamyl-tRNA(Gln) amidotransferase subunit A, found in Synechococcus sp. (strain CC9311).